The following is a 222-amino-acid chain: MKQKYVIIVAGGNGLRMKATIPKQFLLLKGKPILMHTIEAFYRYDTDIHIILVLSEKQKTYWTSLCQQYNFKIDHHTIEGGITRFYSVKNGLFSVKKNCLVAVHDGVRPLVREKLIDNAFKMAQKALAVYPAIPITDSLREITNRNNRTVNRSEFYLVQTPQVFLSDILINAYEATSSDNFTDDISVVESGKICTPTMIKGSKSNIKITTPIDLSIAEALID.

Belongs to the IspD/TarI cytidylyltransferase family. IspD subfamily.

The enzyme catalyses 2-C-methyl-D-erythritol 4-phosphate + CTP + H(+) = 4-CDP-2-C-methyl-D-erythritol + diphosphate. Its pathway is isoprenoid biosynthesis; isopentenyl diphosphate biosynthesis via DXP pathway; isopentenyl diphosphate from 1-deoxy-D-xylulose 5-phosphate: step 2/6. In terms of biological role, catalyzes the formation of 4-diphosphocytidyl-2-C-methyl-D-erythritol from CTP and 2-C-methyl-D-erythritol 4-phosphate (MEP). The chain is 2-C-methyl-D-erythritol 4-phosphate cytidylyltransferase from Azobacteroides pseudotrichonymphae genomovar. CFP2.